A 60-amino-acid polypeptide reads, in one-letter code: Large ribosomal subunit protein uL30 (60 aa).

Belongs to the universal ribosomal protein uL30 family. As to quaternary structure, part of the 50S ribosomal subunit.

The sequence is that of Large ribosomal subunit protein uL30 from Salinispora arenicola (strain CNS-205).